A 133-amino-acid polypeptide reads, in one-letter code: Gamma-crystallin 1 (133 aa).

One can recognise a Beta/gamma crystallin 'Greek key' 2 domain in the interval 1–41; sequence WMLYEHPNYTGHQYFLRRGEYPDFQQWMGLNDSIRSCRVIP. A connecting peptide region spans residues 42 to 46; the sequence is QHRGS. Beta/gamma crystallin 'Greek key' domains are found at residues 47-87 and 88-130; these read FRLR…NVLE and GHWI…RRVQ.

The protein belongs to the beta/gamma-crystallin family. In terms of assembly, monomer.

In terms of biological role, crystallins are the dominant structural components of the vertebrate eye lens. The chain is Gamma-crystallin 1 from Rana temporaria (European common frog).